We begin with the raw amino-acid sequence, 342 residues long: MLKFIQNNREITALLAVLLLFVLPGFLDRQYLSVQTLTMVYSSAQILILLAMGATLVMLTRNIDVSVGSITGMCAVLLGMLLNAGYSLPVACVATLLLGLLAGFFNGVLVAWLKIPAIVATLGTLGLYRGIMLLWTGGKWIEGLPAELKQLSAPLLLGVSAIGWLTIILVAFMAWLLAKTAFGRSFYATGDNLQGARQLGVRTEAIRIVAFSLNGCMAALAGIVFASQIGFIPNQTGTGLEMKAIAACVLGGISLLGGSGAIIGAVLGAWFLTQIDSVLVLLRIPAWWNDFIAGLVLLAVLVFDGRLRCALELNLRRQKYARFMTPPPSVKPASSGKKREAA.

At Met1–Ala13 the chain is on the periplasmic side. The chain crosses the membrane as a helical span at residues Leu14–Val34. Residues Gln35 to Thr38 are Cytoplasmic-facing. The chain crosses the membrane as a helical span at residues Met39–Leu59. Residues Thr60–Ser69 lie on the Periplasmic side of the membrane. Residues Ile70 to Val90 traverse the membrane as a helical segment. At Ala91–Cys92 the chain is on the cytoplasmic side. The chain crosses the membrane as a helical span at residues Val93–Leu113. Lys114 is a topological domain (periplasmic). A helical membrane pass occupies residues Ile115 to Trp135. At Thr136–Pro154 the chain is on the cytoplasmic side. Residues Leu155–Trp175 traverse the membrane as a helical segment. Residues Leu176–Ser212 are Periplasmic-facing. A helical membrane pass occupies residues Leu213–Pro233. Topologically, residues Asn234–Gly251 are cytoplasmic. A helical transmembrane segment spans residues Gly252–Leu272. The Periplasmic segment spans residues Thr273–Arg283. Residues Ile284–Asp304 form a helical membrane-spanning segment. The Cytoplasmic segment spans residues Gly305–Ala342.

The protein belongs to the binding-protein-dependent transport system permease family. AraH/RbsC subfamily. The complex is composed of two ATP-binding proteins (LsrA), two transmembrane proteins (LsrC and LsrD) and a solute-binding protein (LsrB).

It is found in the cell inner membrane. Its function is as follows. Part of the ABC transporter complex LsrABCD involved in autoinducer 2 (AI-2) import. Probably responsible for the translocation of the substrate across the membrane. This chain is Autoinducer 2 import system permease protein LsrC (lsrC), found in Escherichia coli O157:H7.